A 501-amino-acid polypeptide reads, in one-letter code: Cytochrome P450 2J4 (501 aa).

A run of 2 helical transmembrane segments spans residues 12–32 and 77–97; these read IWAA…LLLA and NIFS…LPLI. A heme-binding site is contributed by Cys447.

Belongs to the cytochrome P450 family. It depends on heme as a cofactor. Expressed in small intestinal enterocytes (at protein level). In the intestinal crypt, expressed at higher levels in the mature villous cells than in undifferentiated crypt cells (at protein level). Expressed in liver, kidney, lung, and olfactory mucosa (at protein level).

The protein resides in the endoplasmic reticulum membrane. The protein localises to the microsome membrane. It catalyses the reaction an organic molecule + reduced [NADPH--hemoprotein reductase] + O2 = an alcohol + oxidized [NADPH--hemoprotein reductase] + H2O + H(+). The catalysed reaction is (5Z,8Z,11Z,14Z)-eicosatetraenoate + reduced [NADPH--hemoprotein reductase] + O2 = 19-hydroxy-(5Z,8Z,11Z,14Z)-eicosatetraenoate + oxidized [NADPH--hemoprotein reductase] + H2O + H(+). The enzyme catalyses all-trans-retinal + reduced [NADPH--hemoprotein reductase] + O2 = all-trans-retinoate + oxidized [NADPH--hemoprotein reductase] + H2O + 2 H(+). It carries out the reaction 9-cis-retinal + reduced [NADPH--hemoprotein reductase] + O2 = 9-cis-retinoate + oxidized [NADPH--hemoprotein reductase] + H2O + 2 H(+). It functions in the pathway lipid metabolism; arachidonate metabolism. It participates in cofactor metabolism; retinol metabolism. Functionally, a cytochrome P450 monooxygenase that may play a major role in intestinal retinoid metabolism. Catalyzes the oxidative transformation of all-trans retinal and 9-cis-retinal to the corresponding active forms all-trans and 9-cis retinoic acids. Catalyzes the hydroxylation of carbon-hydrogen bonds. Hydroxylates arachidonic acid predominantly at the omega-1 position. Mechanistically, uses molecular oxygen inserting one oxygen atom into a substrate, and reducing the second into a water molecule, with two electrons provided by NADPH via cytochrome P450 reductase (CPR; NADPH--hemoprotein reductase). The chain is Cytochrome P450 2J4 from Rattus norvegicus (Rat).